The primary structure comprises 69 residues: DNA gyrase inhibitor YacG (69 aa).

Zn(2+) is bound by residues cysteine 7, cysteine 10, cysteine 26, and cysteine 30.

It belongs to the DNA gyrase inhibitor YacG family. Interacts with GyrB. Zn(2+) is required as a cofactor.

In terms of biological role, inhibits all the catalytic activities of DNA gyrase by preventing its interaction with DNA. Acts by binding directly to the C-terminal domain of GyrB, which probably disrupts DNA binding by the gyrase. The protein is DNA gyrase inhibitor YacG of Shewanella sp. (strain W3-18-1).